Consider the following 452-residue polypeptide: Transcription factor AP-2-delta (452 aa).

S239 carries the post-translational modification Phosphoserine; by PKA. The H-S-H (helix-span-helix), dimerization stretch occupies residues 280–410 (RRKAANVTLL…VLSEMLNYLE (131 aa)). The tract at residues 416 to 452 (KNGGAADSGQGHANSEKAPLRKTSEAAVKEGKTEKTD) is disordered. Residues 429–452 (NSEKAPLRKTSEAAVKEGKTEKTD) are compositionally biased toward basic and acidic residues.

Belongs to the AP-2 family. As to quaternary structure, binds DNA as a dimer. Can form homodimers or heterodimers with other AP-2 family members. As to expression, highly expressed in brain, placenta, skeletal muscle, thymus, small intestine, and prostate, and expressed at lower levels in leukocyte, spleen, testis, ovary and colon. Barely detectable in heart, kidney, liver, lung or pancreas.

It is found in the nucleus. Sequence-specific DNA-binding protein that interacts with inducible viral and cellular enhancer elements to regulate transcription of selected genes. AP-2 factors bind to the consensus sequence 5'-GCCNNNGGC-3' and activate genes involved in a large spectrum of important biological functions including proper eye, face, body wall, limb and neural tube development. They also suppress a number of genes including MCAM/MUC18, C/EBP alpha and MYC. This Homo sapiens (Human) protein is Transcription factor AP-2-delta.